Here is a 315-residue protein sequence, read N- to C-terminus: tRNA dimethylallyltransferase (315 aa).

Residue Gly-18 to Thr-25 coordinates ATP. A substrate-binding site is contributed by Thr-20–Thr-25. Interaction with substrate tRNA stretches follow at residues Asp-43–Leu-46, Gln-167–Arg-171, and Arg-248–Arg-253.

The protein belongs to the IPP transferase family. Monomer. Mg(2+) is required as a cofactor.

It catalyses the reaction adenosine(37) in tRNA + dimethylallyl diphosphate = N(6)-dimethylallyladenosine(37) in tRNA + diphosphate. Its function is as follows. Catalyzes the transfer of a dimethylallyl group onto the adenine at position 37 in tRNAs that read codons beginning with uridine, leading to the formation of N6-(dimethylallyl)adenosine (i(6)A). The chain is tRNA dimethylallyltransferase from Pseudoalteromonas atlantica (strain T6c / ATCC BAA-1087).